Consider the following 331-residue polypeptide: Light-harvesting complex I LH35 proteins (331 aa).

It is found in the plastid. The protein resides in the chloroplast. This chain is Light-harvesting complex I LH35 proteins, found in Euglena gracilis.